The following is a 202-amino-acid chain: Large ribosomal subunit protein bL25 (202 aa).

The segment at 182–202 is disordered; the sequence is EVEAEETEDDEAASEGEEAAE. Over residues 183-202 the composition is skewed to acidic residues; that stretch reads VEAEETEDDEAASEGEEAAE.

It belongs to the bacterial ribosomal protein bL25 family. CTC subfamily. Part of the 50S ribosomal subunit; part of the 5S rRNA/L5/L18/L25 subcomplex. Contacts the 5S rRNA. Binds to the 5S rRNA independently of L5 and L18.

This is one of the proteins that binds to the 5S RNA in the ribosome where it forms part of the central protuberance. This chain is Large ribosomal subunit protein bL25, found in Corynebacterium glutamicum (strain R).